A 1893-amino-acid chain; its full sequence is Serine-aspartate repeat-containing protein I (1893 aa).

Residues 1-54 (MNFKGVKLLKNSKKRLDFLPNTLNKYSIRKFTVGTASILVGATLFLGVSNEAEA) form the signal peptide. Residues 53-333 (EAAEKIDSPT…AHGINNKNKQ (281 aa)) are disordered. The span at 54–222 (AAEKIDSPTK…AEEPATKEEA (169 aa)) shows a compositional bias: basic and acidic residues. 21 consecutive repeat copies span residues 72–83 (AATKEEAATTEE), 84–95 (PATKEEAATTEE), 96–107 (PATKEEAAIAEE), 108–119 (PATKEEAATTEE), 120–131 (PATKEEAAIAEE), 132–143 (PATKEEAATTEE), 144–155 (PATKEEAATTEE), 156–167 (PATKEEAAIAEE), 168–179 (PATKEEAATTEE), 180–191 (PATKEEAAIAEE), 192–203 (PATKEEAVTSEE), 204–215 (AATKEKAAIAEE), 216–227 (PATKEEAAIAEE), 228–239 (PETKEEAATTEE), 240–251 (PATKEEAAIAEE), 252–263 (AATKEKAVTSEE), 264–275 (AATKEKAAIAEE), 276–287 (AATKEKAAIAEE), 288–299 (PETKEEAATTEE), 300–311 (PETKEEAAIAEE), and 312–323 (PATKEKAVTSEE). The interval 72 to 323 (AATKEEAATT…TKEKAVTSEE (252 aa)) is 21 X 12 AA tandem repeat of [AP]-[AE]-T-K-E-[EK]-A-[AV]-[IT]-[AST]-E-E. Positions 240 to 284 (PATKEEAAIAEEAATKEKAVTSEEAATKEKAAIAEEAATKEKAAI) are enriched in basic and acidic residues. Residues 286-302 (EEPETKEEAATTEEPET) show a composition bias toward acidic residues. The span at 312 to 325 (PATKEKAVTSEEAH) shows a compositional bias: basic and acidic residues. Residues 324-755 (AHGINNKNKQ…GSSTAQGDNP (432 aa)) form a ligand binding A region region. 2 consecutive CNA-B domains span residues 756–874 (TYNL…YETP) and 875–984 (KYSL…YFDE). Residues 941 to 1867 (KPEGLTQTTT…GNNTQNNGTL (927 aa)) form a disordered region. The span at 955 to 975 (DENKDADGEEVHVTITDHDDF) shows a compositional bias: basic and acidic residues. The span at 981–1836 (YFDEDSDADA…DSDADADADS (856 aa)) shows a compositional bias: acidic residues. The span at 1837-1851 (DADKYHNDTADKSND) shows a compositional bias: basic and acidic residues. An LPXTG sorting signal motif is present at residues 1854-1858 (LPDTG). T1857 is subject to Pentaglycyl murein peptidoglycan amidated threonine. Positions 1858-1893 (GNNTQNNGTLFGSLFAALGGLFLVGSRRKNKNNEEK) are cleaved as a propeptide — removed by sortase.

This sequence belongs to the serine-aspartate repeat-containing protein (SDr) family.

Its subcellular location is the secreted. It localises to the cell wall. Functionally, responsible for collagen binding by S.saprophyticus. This is Serine-aspartate repeat-containing protein I (sdrI) from Staphylococcus saprophyticus.